The primary structure comprises 883 residues: MAAERSSITLGGKGSSLSSSSVYNVASGVANVRIDSSAIERFSTRNVPSIKRSSFGIPQGLTNEETRASLAVLLNKLILSTSGPPSSSTARSVLPLKIVEILNLKAESLELGEIDVTEGENIVLEKSCASLIGICSIIDHKSTTLSQIVDSVAALSCEVTKADIASFSLLDSGDGNGDKDVIGVAGDLKVLLNGYKGTGKLEIEEISKIPWIHGKFRYVVKSVHADARRELNSGVKGGKTGSGNTGIGEALGTTLLPLLTAIKNLGVCSFLRAKLCFEKIVDENLKKCLSEKICVENENLKNSYKLAYTAHLEEDYCRFAHKLNECLGIVWRIVGLEAVAAFFALAGGELFVQKSGDADKEESKTDKKKKKNEKKAVVGKGTSLVIQFIKDRLVSNDAASDGDQMHSLMQCGEQILNLFNPEGRSFDSLLDKVKEIVESNENRRLPKLPKGTRDFAKEQMAVREKAFSIIQNVFKRHGATALDTPVFELRETLMGKYGEDSKLVYDIADQGGELCSLRYDLTVPFARYVAMNGITSFKRYQIAKVYRRDNPSKGRYREFYQCDFDIAGLFEPMGPDFEIVKILTELLDELEIGDYEVKLNHRKLLDGMLEICGVPPEKFRTICSSIDKLDKQSFEQVKKEMVEEKGLSSEIADRIGNFVKEKGAPLELLSKLRQEGSEFLDNQSSREALDELSIMFEALKRSKCSERIVFDLSLARGLDYYTGVIFEAVCIGAEVGSIGAGGRYDNLIGMFGTKQVPAVGMSLGIERVFNIMEELNEKQKQVIRPTETQVLVSIMVDNKLAEAAELVSQLWGAKINAEYLVSKRKEKHFNRAKESGIPWMVMVGEKELSGSFVTLKKLEKGSEEKEDQTCTRDRFVEELKKLL.

It belongs to the class-II aminoacyl-tRNA synthetase family.

Its subcellular location is the cytoplasm. It is found in the cytosol. It catalyses the reaction tRNA(His) + L-histidine + ATP = L-histidyl-tRNA(His) + AMP + diphosphate + H(+). The chain is Histidine--tRNA ligase, cytoplasmic from Arabidopsis thaliana (Mouse-ear cress).